A 145-amino-acid chain; its full sequence is Transcription antitermination protein NusB (145 aa).

This sequence belongs to the NusB family.

Its function is as follows. Involved in transcription antitermination. Required for transcription of ribosomal RNA (rRNA) genes. Binds specifically to the boxA antiterminator sequence of the ribosomal RNA (rrn) operons. The polypeptide is Transcription antitermination protein NusB (Geobacter sp. (strain M21)).